Here is a 138-residue protein sequence, read N- to C-terminus: Small ribosomal subunit protein uS11c (138 aa).

The disordered stretch occupies residues 1–22; the sequence is MAKAIPKISSRRNGRIGSRKGA. The span at 9–22 shows a compositional bias: basic residues; the sequence is SSRRNGRIGSRKGA.

This sequence belongs to the universal ribosomal protein uS11 family. In terms of assembly, part of the 30S ribosomal subunit.

The protein resides in the plastid. It is found in the chloroplast. The protein is Small ribosomal subunit protein uS11c of Nicotiana tomentosiformis (Tobacco).